A 460-amino-acid chain; its full sequence is Photosystem II CP43 reaction center protein (460 aa).

The Cytoplasmic segment spans residues 1 to 35; the sequence is MVTLSNTSMVGGRDLPSTGFAWWSGNARLINLSGK. The chain crosses the membrane as a helical span at residues 36–58; it reads LLGAHVAHAGLIVFWAGAMTLFE. Topologically, residues 59–98 are lumenal, thylakoid; sequence VAHFIPEKPMYEQGLILLPHIATLGWGVGPAGEVTDIFPF. A helical membrane pass occupies residues 99-121; the sequence is FVVGVLHLISSAVLGLGGIYHAL. The Cytoplasmic portion of the chain corresponds to 122–142; that stretch reads RGPEVLEEYSSFFGYDWKDKN. Residues 143-165 form a helical membrane-spanning segment; it reads QMTNIIGYHLILLGCGALLLVFK. The Lumenal, thylakoid portion of the chain corresponds to 166-220; the sequence is AMFFGGVYDTWAPGGGDVRVITNPTLNPAIIFGYLLKAPFGGEGWIISVNNMEDI. The chain crosses the membrane as a helical span at residues 221–240; it reads IGGHIWIGLICISGGIWHIL. Residues 241 to 255 are Cytoplasmic-facing; sequence TKPFGWARRALIWSG. The chain crosses the membrane as a helical span at residues 256 to 276; it reads EAYLSYSLGALSLMGFIASVF. Over 277–411 the chain is Lumenal, thylakoid; the sequence is VWFNNTAYPS…NSFNYVSPRA (135 aa). The [CaMn4O5] cluster site is built by Glu341 and Arg344. A helical transmembrane segment spans residues 412–436; it reads WLATSHFVLGFFFLVGHLWHAGRAR. Residues 437–460 are Cytoplasmic-facing; sequence AAAAGFEKGIDRETEPTLFMPDLD.

Belongs to the PsbB/PsbC family. PsbC subfamily. In terms of assembly, PSII is composed of 1 copy each of membrane proteins PsbA, PsbB, PsbC, PsbD, PsbE, PsbF, PsbH, PsbI, PsbJ, PsbK, PsbL, PsbM, PsbT, PsbX, PsbY, PsbZ, Psb30/Ycf12, peripheral proteins PsbO, CyanoQ (PsbQ), PsbU, PsbV and a large number of cofactors. It forms dimeric complexes. The cofactor is Binds multiple chlorophylls and provides some of the ligands for the Ca-4Mn-5O cluster of the oxygen-evolving complex. It may also provide a ligand for a Cl- that is required for oxygen evolution. PSII binds additional chlorophylls, carotenoids and specific lipids..

The protein resides in the cellular thylakoid membrane. Its function is as follows. One of the components of the core complex of photosystem II (PSII). PSII binds chlorophyll and helps catalyze the primary light-induced photochemical processes of PSII. PSII is a light-driven water:plastoquinone oxidoreductase, using light energy to abstract electrons from H(2)O, generating O(2) and a proton gradient subsequently used for ATP formation. Required for correct assembly of PSII. In Synechocystis sp. (strain ATCC 27184 / PCC 6803 / Kazusa), this protein is Photosystem II CP43 reaction center protein.